The primary structure comprises 395 residues: Putative transport protein sll0063 (395 aa).

8 consecutive transmembrane segments (helical) span residues 24 to 44, 50 to 70, 91 to 111, 180 to 200, 245 to 265, 269 to 289, 295 to 315, and 328 to 348; these read LNAI…VLNA, IFGY…IAFL, FVFL…IPLA, VFTV…FYLL, ALGL…LFGL, VMAL…FLVA, MALQ…NGIA, and FWVL…GVIV.

This sequence belongs to the autoinducer-2 exporter (AI-2E) (TC 2.A.86) family.

The protein resides in the cell membrane. The sequence is that of Putative transport protein sll0063 from Synechocystis sp. (strain ATCC 27184 / PCC 6803 / Kazusa).